Here is a 1529-residue protein sequence, read N- to C-terminus: ABC multidrug transporter AFR2 (1529 aa).

Residues Gly144–Ser394 enclose the ABC transporter 1 domain. 2 N-linked (GlcNAc...) asparagine glycosylation sites follow: Asn235 and Asn318. 5 helical membrane passes run Leu510 to Thr530, Ala539 to Leu559, Ile589 to Leu609, Gly614 to Phe634, and Leu648 to Val668. A glycan (N-linked (GlcNAc...) asparagine) is linked at Asn742. A helical membrane pass occupies residues Gly757–Ile777. An ABC transporter 2 domain is found at Phe845–Gly1087. ATP is bound at residue Gly881 to Thr888. The next 5 membrane-spanning stretches (helical) occupy residues Tyr1193–Phe1213, Val1229–Thr1249, Ile1268–Ile1288, Leu1314–Val1334, and Met1353–Phe1373. The N-linked (GlcNAc...) asparagine glycan is linked to Asn1434. A helical transmembrane segment spans residues Phe1465–Leu1485. Positions Gly1493–Glu1505 are enriched in basic and acidic residues. The segment at Gly1493–Ala1529 is disordered. The segment covering Gln1518–Ala1529 has biased composition (polar residues).

Belongs to the ABC transporter superfamily. ABCG family. PDR (TC 3.A.1.205) subfamily.

It is found in the cell membrane. The catalysed reaction is itraconazole(in) + ATP + H2O = itraconazole(out) + ADP + phosphate + H(+). It carries out the reaction voriconazole(in) + ATP + H2O = voriconazole(out) + ADP + phosphate + H(+). The enzyme catalyses fluconazole(in) + ATP + H2O = fluconazole(out) + ADP + phosphate + H(+). Its function is as follows. Pleiotropic ABC efflux transporter that confers resistance to structurally and functionally unrelated compounds including azoles such as fluconazole (FLC), itraconazole (ITC), posaconazole (POS), and voriconazole (VRC). The polypeptide is ABC multidrug transporter AFR2 (Cryptococcus deuterogattii (strain R265) (Cryptococcus gattii VGII (strain R265))).